Here is a 485-residue protein sequence, read N- to C-terminus: E3 ubiquitin-protein ligase TRIM34B (485 aa).

The segment at 15–58 (CPVCQELLTKALSLGCGHLVCQACLISNKNAVINPRGKSSCPVC) adopts an RING-type zinc-finger fold. The segment at 91 to 127 (TKRDLCVHHGEKLLLFCKEDKKVICWVCERSQEHRGH) adopts a B box-type zinc-finger fold. Positions 96, 99, 118, and 124 each coordinate Zn(2+). Positions 136-170 (VRECQENLQKALTRLRKEQEKVETLEADIKEDRLS) form a coiled coil. The B30.2/SPRY domain maps to 282 to 485 (LSGMLQKFRE…APMTLCPLNS (204 aa)).

Belongs to the TRIM/RBCC family. Homotrimer. Interacts (via B-box and SPRY domain) with TRIM5.

The protein resides in the cytoplasm. It localises to the mitochondrion. It catalyses the reaction S-ubiquitinyl-[E2 ubiquitin-conjugating enzyme]-L-cysteine + [acceptor protein]-L-lysine = [E2 ubiquitin-conjugating enzyme]-L-cysteine + N(6)-ubiquitinyl-[acceptor protein]-L-lysine.. It participates in protein modification; protein ubiquitination. Functions as antiviral protein and contributes to the defense against retroviral infections. Acts as a capsid-specific restriction factor with the help of TRIM5 and prevents infection from non-host-adapted retroviruses. During influenza A virus infection, promotes programmed cell death by targeting ZBP1 for 'Lys-63'-linked polyubiquitination. In turn, promotes ZBP1 recruitment of RIPK3 to mediate virus-induced programmed necrosis. Negatively regulates the function of mitochondria by enhancing mitochondrial depolarization leading to cytochrome c release and mitochondria-dependent apoptosis. Also promotes the formation of multinucleated giant cells by means of cell fusion and phagocytosis in epithelial cells. Regulates intestinal inflammation by controlling the exocytosis of the major component of colonic mucus MUC2 from colonic goblet cells. The sequence is that of E3 ubiquitin-protein ligase TRIM34B from Mus musculus (Mouse).